A 251-amino-acid chain; its full sequence is 1-(5-phosphoribosyl)-5-[(5-phosphoribosylamino)methylideneamino] imidazole-4-carboxamide isomerase (251 aa).

Catalysis depends on aspartate 8, which acts as the Proton acceptor. The active-site Proton donor is aspartate 131.

It belongs to the HisA/HisF family.

The protein resides in the cytoplasm. The enzyme catalyses 1-(5-phospho-beta-D-ribosyl)-5-[(5-phospho-beta-D-ribosylamino)methylideneamino]imidazole-4-carboxamide = 5-[(5-phospho-1-deoxy-D-ribulos-1-ylimino)methylamino]-1-(5-phospho-beta-D-ribosyl)imidazole-4-carboxamide. Its pathway is amino-acid biosynthesis; L-histidine biosynthesis; L-histidine from 5-phospho-alpha-D-ribose 1-diphosphate: step 4/9. This chain is 1-(5-phosphoribosyl)-5-[(5-phosphoribosylamino)methylideneamino] imidazole-4-carboxamide isomerase, found in Burkholderia pseudomallei (strain 1710b).